The following is a 204-amino-acid chain: Urease accessory protein UreG (204 aa).

12-19 is a binding site for GTP; it reads GPVGSGKT.

This sequence belongs to the SIMIBI class G3E GTPase family. UreG subfamily. As to quaternary structure, homodimer. UreD, UreF and UreG form a complex that acts as a GTP-hydrolysis-dependent molecular chaperone, activating the urease apoprotein by helping to assemble the nickel containing metallocenter of UreC. The UreE protein probably delivers the nickel.

It localises to the cytoplasm. Its function is as follows. Facilitates the functional incorporation of the urease nickel metallocenter. This process requires GTP hydrolysis, probably effectuated by UreG. The polypeptide is Urease accessory protein UreG (Ectopseudomonas mendocina (strain ymp) (Pseudomonas mendocina)).